The sequence spans 317 residues: Ribonuclease H2 subunit A (317 aa).

The region spanning 43 to 270 (PCCLGVDEAG…AKDMLETKGG (228 aa)) is the RNase H type-2 domain. A divalent metal cation is bound by residues Asp49, Glu50, and Asp166.

It belongs to the RNase HII family. Eukaryotic subfamily. The cofactor is Mn(2+). Requires Mg(2+) as cofactor.

It carries out the reaction Endonucleolytic cleavage to 5'-phosphomonoester.. Its function is as follows. Endonuclease that specifically degrades the RNA of RNA-DNA hybrids. Participates in DNA replication. In Neurospora crassa (strain ATCC 24698 / 74-OR23-1A / CBS 708.71 / DSM 1257 / FGSC 987), this protein is Ribonuclease H2 subunit A (rnh-201).